A 587-amino-acid chain; its full sequence is Glutaconyl-CoA decarboxylase subunit alpha (587 aa).

The region spanning 31-298 is the CoA carboxyltransferase N-terminal domain; it reads LKKIEEEIHQ…YDPEFFRVDD (268 aa). Residues 31-558 are carboxyltransferase; the sequence is LKKIEEEIHQ…RGYVEAFTEA (528 aa). Residues 295-558 form the CoA carboxyltransferase C-terminal domain; sequence RVDDPKAPAF…RGYVEAFTEA (264 aa).

As to quaternary structure, heterooctamer consisting of two alpha, two beta, two gamma and two delta subunits.

It carries out the reaction (2E)-glutaconyl-CoA + Na(+)(in) + H(+) = (2E)-butenoyl-CoA + Na(+)(out) + CO2. It functions in the pathway amino-acid degradation; L-glutamate degradation via hydroxyglutarate pathway; crotonoyl-CoA from L-glutamate: step 5/5. Its function is as follows. Decarboxylase subunit of the primary sodium pump glutaconyl-CoA decarboxylase (GCD). The chain is Glutaconyl-CoA decarboxylase subunit alpha (gcdA) from Acidaminococcus fermentans (strain ATCC 25085 / DSM 20731 / CCUG 9996 / CIP 106432 / VR4).